Reading from the N-terminus, the 735-residue chain is Alpha-adducin (735 aa).

The residue at position 1 (Met-1) is an N-acetylmethionine. Low complexity predominate over residues 1–11 (MNGDTRAAVVT). Residues 1–21 (MNGDTRAAVVTSPPPTTAPHK) are disordered. Phosphoserine occurs at positions 12, 59, and 64. Thr-331 carries the phosphothreonine modification. Phosphoserine is present on residues Ser-334, Ser-353, and Ser-355. A Phosphothreonine modification is found at Thr-358. A phosphoserine mark is found at Ser-364, Ser-366, Ser-408, and Ser-427. 2 disordered regions span residues 418–487 (GHSF…AVPN) and 576–735 (RREV…KSDS). Phosphothreonine is present on Thr-429. Phosphoserine is present on residues Ser-431 and Ser-436. Positions 440–455 (QQREKTRWLHSGRGDD) are enriched in basic and acidic residues. Position 445 is a phosphothreonine; by ROCK2 (Thr-445). Phosphoserine is present on residues Ser-464 and Ser-465. Position 480 is a phosphothreonine; by ROCK2 (Thr-480). Ser-481 carries the post-translational modification Phosphoserine; by PKA. The span at 576 to 601 (RREVERKQKGSEENLDETREQKEKSP) shows a compositional bias: basic and acidic residues. 3 positions are modified to phosphoserine: Ser-586, Ser-600, and Ser-605. Thr-610 bears the Phosphothreonine mark. Ser-613 is modified (phosphoserine). Thr-614 bears the Phosphothreonine mark. Low complexity predominate over residues 698–712 (GSPMDPGSDGSPGKS). Ser-705, Ser-708, and Ser-712 each carry phosphoserine. The span at 713-735 (PSKKKKKFRTPSFLKKSKKKSDS) shows a compositional bias: basic residues. Ser-714 carries the phosphoserine; by PKC modification. The interaction with calmodulin stretch occupies residues 715–732 (KKKKKFRTPSFLKKSKKK). Phosphoserine; by PKA and PKC is present on Ser-724.

This sequence belongs to the aldolase class II family. Adducin subfamily. Heterodimer of an alpha and a beta subunit or an alpha and a gamma subunit.

It localises to the cytoplasm. Its subcellular location is the cytoskeleton. It is found in the cell membrane. Functionally, membrane-cytoskeleton-associated protein that promotes the assembly of the spectrin-actin network. Binds to calmodulin. The protein is Alpha-adducin (Add1) of Mus musculus (Mouse).